The primary structure comprises 240 residues: Uridylate kinase (240 aa).

12-15 (KLSG) provides a ligand contact to ATP. An involved in allosteric activation by GTP region spans residues 20–25 (GDKGFG). A UMP-binding site is contributed by Gly54. The ATP site is built by Gly55 and Arg59. UMP is bound by residues Asp74 and 135–142 (TGSPYFST). ATP contacts are provided by Asn163, Tyr169, and Asp172.

Belongs to the UMP kinase family. Homohexamer.

The protein resides in the cytoplasm. The catalysed reaction is UMP + ATP = UDP + ADP. It functions in the pathway pyrimidine metabolism; CTP biosynthesis via de novo pathway; UDP from UMP (UMPK route): step 1/1. With respect to regulation, allosterically activated by GTP. Inhibited by UTP. Functionally, catalyzes the reversible phosphorylation of UMP to UDP. The sequence is that of Uridylate kinase from Levilactobacillus brevis (strain ATCC 367 / BCRC 12310 / CIP 105137 / JCM 1170 / LMG 11437 / NCIMB 947 / NCTC 947) (Lactobacillus brevis).